The sequence spans 379 residues: Lipoyl synthase 1, mitochondrial (379 aa).

[4Fe-4S] cluster contacts are provided by cysteine 106, cysteine 111, cysteine 117, cysteine 137, cysteine 141, cysteine 144, and serine 352. Residues glutamate 122–leucine 341 form the Radical SAM core domain.

Belongs to the radical SAM superfamily. Lipoyl synthase family. [4Fe-4S] cluster serves as cofactor.

Its subcellular location is the mitochondrion. It carries out the reaction [[Fe-S] cluster scaffold protein carrying a second [4Fe-4S](2+) cluster] + N(6)-octanoyl-L-lysyl-[protein] + 2 oxidized [2Fe-2S]-[ferredoxin] + 2 S-adenosyl-L-methionine + 4 H(+) = [[Fe-S] cluster scaffold protein] + N(6)-[(R)-dihydrolipoyl]-L-lysyl-[protein] + 4 Fe(3+) + 2 hydrogen sulfide + 2 5'-deoxyadenosine + 2 L-methionine + 2 reduced [2Fe-2S]-[ferredoxin]. Its pathway is protein modification; protein lipoylation via endogenous pathway; protein N(6)-(lipoyl)lysine from octanoyl-[acyl-carrier-protein]: step 2/2. In terms of biological role, catalyzes the radical-mediated insertion of two sulfur atoms into the C-6 and C-8 positions of the octanoyl moiety bound to the lipoyl domains of lipoate-dependent enzymes, thereby converting the octanoylated domains into lipoylated derivatives. This is Lipoyl synthase 1, mitochondrial from Drosophila yakuba (Fruit fly).